A 610-amino-acid chain; its full sequence is Isocitrate dehydrogenase kinase/phosphatase (610 aa).

ATP is bound by residues 359-365 (APGFKGT) and Lys-380. The active site involves Asp-419.

Belongs to the AceK family.

It localises to the cytoplasm. The catalysed reaction is L-seryl-[isocitrate dehydrogenase] + ATP = O-phospho-L-seryl-[isocitrate dehydrogenase] + ADP + H(+). Functionally, bifunctional enzyme which can phosphorylate or dephosphorylate isocitrate dehydrogenase (IDH) on a specific serine residue. This is a regulatory mechanism which enables bacteria to bypass the Krebs cycle via the glyoxylate shunt in response to the source of carbon. When bacteria are grown on glucose, IDH is fully active and unphosphorylated, but when grown on acetate or ethanol, the activity of IDH declines drastically concomitant with its phosphorylation. The polypeptide is Isocitrate dehydrogenase kinase/phosphatase (Rhodopseudomonas palustris (strain ATCC BAA-98 / CGA009)).